Consider the following 556-residue polypeptide: Peptidylarginine deiminase (556 aa).

The first 23 residues, 1–23 (MKKLLQAKALILALGLFQLPAIA), serve as a signal peptide directing secretion. The propeptide occupies 24–43 (QTQMQADRTNGQFATEEMQR). The active-site Amidino-cysteine intermediate is Cys-351.

This sequence belongs to the agmatine deiminase family. It depends on FAD as a cofactor. FMN is required as a cofactor.

It is found in the secreted. With respect to regulation, inhibited by cysteine and TLCK. Inhibited by high concentration of thiourea and thio-L-citrulline. Deiminates the guanidino group of C-terminal arginine residues on a variety of peptides, including the vasoregulatory peptide-hormone bradykinin, to yield ammonia and a citrulline residue. May promote the growth of the pathogen in the periodontal pocket by producing ammonia, ammonia having a protective effect during acidic cleaning cycles in the mouth. The sequence is that of Peptidylarginine deiminase from Porphyromonas gingivalis (strain ATCC BAA-308 / W83).